We begin with the raw amino-acid sequence, 119 residues long: Putative membrane protein insertion efficiency factor (119 aa).

Belongs to the UPF0161 family.

Its subcellular location is the cell inner membrane. Could be involved in insertion of integral membrane proteins into the membrane. The polypeptide is Putative membrane protein insertion efficiency factor (Agrobacterium fabrum (strain C58 / ATCC 33970) (Agrobacterium tumefaciens (strain C58))).